Consider the following 473-residue polypeptide: Chromosomal replication initiator protein DnaA (473 aa).

The segment at 1–90 (MSSSLWLQCL…KRVTAPKSET (90 aa)) is domain I, interacts with DnaA modulators. A domain II region spans residues 91–136 (IAPARTRTAADVAAESSAPAQLQARKPVHNIWRDEEPVAVDLNHRS). The segment at 137-353 (NVNPKHKFNN…GALNRVIANA (217 aa)) is domain III, AAA+ region. ATP is bound by residues G181, G183, K184, and T185. The domain IV, binds dsDNA stretch occupies residues 354–473 (NFTGRPITID…YSNLIRTLSS (120 aa)).

Belongs to the DnaA family. As to quaternary structure, oligomerizes as a right-handed, spiral filament on DNA at oriC.

The protein localises to the cytoplasm. Plays an essential role in the initiation and regulation of chromosomal replication. ATP-DnaA binds to the origin of replication (oriC) to initiate formation of the DNA replication initiation complex once per cell cycle. Binds the DnaA box (a 9 base pair repeat at the origin) and separates the double-stranded (ds)DNA. Forms a right-handed helical filament on oriC DNA; dsDNA binds to the exterior of the filament while single-stranded (ss)DNA is stabiized in the filament's interior. The ATP-DnaA-oriC complex binds and stabilizes one strand of the AT-rich DNA unwinding element (DUE), permitting loading of DNA polymerase. After initiation quickly degrades to an ADP-DnaA complex that is not apt for DNA replication. Binds acidic phospholipids. The sequence is that of Chromosomal replication initiator protein DnaA from Vibrio atlanticus (strain LGP32) (Vibrio splendidus (strain Mel32)).